We begin with the raw amino-acid sequence, 192 residues long: Ion-translocating oxidoreductase complex subunit A (192 aa).

The next 6 membrane-spanning stretches (helical) occupy residues 5-25 (LLLL…FLGL), 39-59 (IGMG…AYLV), 63-83 (ILTP…VIAV), 102-122 (LLGI…VALL), 134-154 (IIYG…FAAM), and 171-191 (SIAM…TGLV).

This sequence belongs to the NqrDE/RnfAE family. The complex is composed of six subunits: RnfA, RnfB, RnfC, RnfD, RnfE and RnfG.

Its subcellular location is the cell inner membrane. Functionally, part of a membrane-bound complex that couples electron transfer with translocation of ions across the membrane. The protein is Ion-translocating oxidoreductase complex subunit A of Vibrio atlanticus (strain LGP32) (Vibrio splendidus (strain Mel32)).